Reading from the N-terminus, the 207-residue chain is Probable nicotinate-nucleotide adenylyltransferase (207 aa).

It belongs to the NadD family.

It carries out the reaction nicotinate beta-D-ribonucleotide + ATP + H(+) = deamido-NAD(+) + diphosphate. It participates in cofactor biosynthesis; NAD(+) biosynthesis; deamido-NAD(+) from nicotinate D-ribonucleotide: step 1/1. Functionally, catalyzes the reversible adenylation of nicotinate mononucleotide (NaMN) to nicotinic acid adenine dinucleotide (NaAD). This is Probable nicotinate-nucleotide adenylyltransferase from Desulfitobacterium hafniense (strain Y51).